A 76-amino-acid polypeptide reads, in one-letter code: UPF0352 protein PC1_1633 (76 aa).

The protein belongs to the UPF0352 family.

The chain is UPF0352 protein PC1_1633 from Pectobacterium carotovorum subsp. carotovorum (strain PC1).